The sequence spans 249 residues: Segregation and condensation protein A (249 aa).

It belongs to the ScpA family. Component of a cohesin-like complex composed of ScpA, ScpB and the Smc homodimer, in which ScpA and ScpB bind to the head domain of Smc. The presence of the three proteins is required for the association of the complex with DNA.

Its subcellular location is the cytoplasm. Participates in chromosomal partition during cell division. May act via the formation of a condensin-like complex containing Smc and ScpB that pull DNA away from mid-cell into both cell halves. The chain is Segregation and condensation protein A from Clostridium acetobutylicum (strain ATCC 824 / DSM 792 / JCM 1419 / IAM 19013 / LMG 5710 / NBRC 13948 / NRRL B-527 / VKM B-1787 / 2291 / W).